Consider the following 696-residue polypeptide: Transcriptional regulatory protein pro1 (696 aa).

A disordered region spans residues M1–H48. Residues T21–A40 are compositionally biased toward low complexity. Positions C55–C82 form a DNA-binding region, zn(2)-C6 fungal-type. The interval L112–D145 is disordered. Over residues H118–F140 the composition is skewed to polar residues.

It localises to the nucleus. May be involved in fruiting body development. The protein is Transcriptional regulatory protein pro1 (adv-1) of Neurospora crassa (strain ATCC 24698 / 74-OR23-1A / CBS 708.71 / DSM 1257 / FGSC 987).